A 457-amino-acid chain; its full sequence is Multidrug resistance protein MdtK (457 aa).

12 helical membrane-spanning segments follow: residues 11–31, 53–73, 93–113, 127–147, 160–180, 191–211, 243–263, 276–296, 316–336, 350–370, 387–407, and 418–438; these read LLAL…MGFV, IWLP…PVVA, WLAG…GYII, AVGY…FQVA, GMVM…IFIY, VGCG…MLWW, LPIA…ALLV, IALN…AAVT, RTGV…TVLM, VVLL…SDSI, IFFI…YLLA, and PAGF…MMML.

It belongs to the multi antimicrobial extrusion (MATE) (TC 2.A.66.1) family. MdtK subfamily.

It localises to the cell inner membrane. Multidrug efflux pump that functions probably as a Na(+)/drug antiporter. The chain is Multidrug resistance protein MdtK from Klebsiella pneumoniae (strain 342).